Consider the following 196-residue polypeptide: Phosphoheptose isomerase (196 aa).

One can recognise an SIS domain in the interval 31–196 (VARQFKAGNK…KAGLEAQIAV (166 aa)). 46 to 48 (NGG) serves as a coordination point for substrate. Residues H55 and E59 each contribute to the Zn(2+) site. Residues E59, 88–89 (ND), 114–116 (STS), S119, and Q166 each bind substrate. The Zn(2+) site is built by Q166 and H174.

It belongs to the SIS family. GmhA subfamily. Zn(2+) serves as cofactor.

It localises to the cytoplasm. The catalysed reaction is 2 D-sedoheptulose 7-phosphate = D-glycero-alpha-D-manno-heptose 7-phosphate + D-glycero-beta-D-manno-heptose 7-phosphate. Its pathway is carbohydrate biosynthesis; D-glycero-D-manno-heptose 7-phosphate biosynthesis; D-glycero-alpha-D-manno-heptose 7-phosphate and D-glycero-beta-D-manno-heptose 7-phosphate from sedoheptulose 7-phosphate: step 1/1. Functionally, catalyzes the isomerization of sedoheptulose 7-phosphate in D-glycero-D-manno-heptose 7-phosphate. In Crocosphaera subtropica (strain ATCC 51142 / BH68) (Cyanothece sp. (strain ATCC 51142)), this protein is Phosphoheptose isomerase.